A 270-amino-acid polypeptide reads, in one-letter code: Decarboxylase NovR (270 aa).

Belongs to the aldolase class II family.

It functions in the pathway antibiotic biosynthesis; novobiocin biosynthesis. Functionally, may mediate the 2 consecutive oxidative decarboxylation steps in the biosynthesis of the prenylated hydroxybenzoic acid moiety of novobiocin, an aminocoumarin family antibiotic that targets bacterial DNA gyrases. The polypeptide is Decarboxylase NovR (novR) (Streptomyces niveus (Streptomyces spheroides)).